The chain runs to 714 residues: MVKLAKAGKTHGEAKKMAPPPKEVEEDSEDEEMSEEEDDSSGEEVVIPQKKGKKATATPAKKVVVSQTKKVAVPTPAKKAAVTPGKKAAATPAKKAVTPAKAVATPGKKGATQAKALVATPGKKGAVTPAKGAKNGKNAKKEDSDEDEDDDDDEDDSDEDEEDEEEDEFEPPVVKGKQGKVAAAAPASEDEDEEEDEEEEEEDEEEEDDSEEEEAMEITPAKGKKAPAKVVPVKAKNVAEEDDDDEEEDEDEEEDEEEEEDEEEEEEEEEEEPVKPAPGKRKKEMTKQKEVPEAKKQKVEGSESTTPFNLFIGNLNPNKSVAELKVAISEPFAKNDLAVVDVRTGTNRKFGYVDFESAEDLEKALELTGLKVFGNEIKLEKPKGRDSKKVRAARTLLAKNLSFNITEDELKEVFEDALEIRLVSQDGKSKGIAYIEFKSEADAEKNLEEKQGAEIDGRSVSLYYTGEKGQRQERTGKNSTWSGESKTLVLSNLSYSATEETLQEVFEKATFIKVPQNQQGKSKGYAFIEFASFEDAKEALNSCNKMEIEGRTIRLELQGPRGSPNARSQPSKTLFVKGLSEDTTEETLKESFEGSVRARIVTDRETGSSKGFGFVDFNSEEDAKAAKEAMEDGEIDGNKVTLDWAKPKGEGGFGGRGGGRGGFGGRGGGRGGGRGGFGGRGRGGFGGRGGFRGGRGGGGGGGDFKPQGKKTKFE.

The tract at residues 1–303 (MVKLAKAGKT…AKKQKVEGSE (303 aa)) is disordered. Residues K9, K15, and K16 each carry the N6-acetyllysine modification. Over residues 24–42 (VEEDSEDEEMSEEEDDSSG) the composition is skewed to acidic residues. 4 positions are modified to phosphoserine: S28, S34, S40, and S41. The span at 55-106 (ATATPAKKVVVSQTKKVAVPTPAKKAAVTPGKKAAATPAKKAVTPAKAVATP) shows a compositional bias: low complexity. Repeat unit 1 spans residues 57–64 (ATPAKKVV). The tract at residues 57-134 (ATPAKKVVVS…GAVTPAKGAK (78 aa)) is 8 X 8 AA tandem repeats of X-T-P-X-K-K-X-X. S66 is modified (phosphoserine). A phosphothreonine mark is found at T68, T75, T83, and T91. 3 consecutive repeat copies span residues 74–81 (PTPAKKAA), 82–89 (VTPGKKAA), and 90–97 (ATPAKKAV). K95 bears the N6-acetyllysine mark. T98 carries the post-translational modification Phosphothreonine. The stretch at 98-103 (TPAKAV) is one 5; truncated repeat. An N6-acetyllysine modification is found at K101. The stretch at 104 to 111 (ATPGKKGA) is repeat 6. T105 bears the Phosphothreonine mark. Residue K108 is modified to N6-acetyllysine. T112 carries the phosphothreonine modification. The residue at position 115 (K115) is an N6-acetyllysine. Repeat copies occupy residues 119-126 (ATPGKKGA) and 127-134 (VTPAKGAK). Residue T120 is modified to Phosphothreonine. N6-acetyllysine is present on K123. Phosphoserine is present on residues S144 and S157. Positions 144–170 (SDEDEDDDDDEDDSDEDEEDEEEDEFE) are enriched in acidic residues. The segment covering 171-187 (PPVVKGKQGKVAAAAPA) has biased composition (low complexity). The residue at position 188 (S188) is a Phosphoserine. Over residues 188 to 216 (SEDEDEEEDEEEEEEDEEEEDDSEEEEAM) the composition is skewed to acidic residues. A Phosphothreonine modification is found at T219. Residues 240–272 (EEDDDDEEEDEDEEEDEEEEEDEEEEEEEEEEE) show a composition bias toward acidic residues. A compositionally biased stretch (basic and acidic residues) spans 285–301 (MTKQKEVPEAKKQKVEG). K298 is covalently cross-linked (Glycyl lysine isopeptide (Lys-Gly) (interchain with G-Cter in SUMO1); alternate). K298 participates in a covalent cross-link: Glycyl lysine isopeptide (Lys-Gly) (interchain with G-Cter in SUMO2); alternate. A Phosphoserine modification is found at S302. RRM domains lie at 308–384 (FNLF…KPKG) and 394–467 (RTLL…YTGE). K319 carries the post-translational modification N6-acetyllysine. K325 participates in a covalent cross-link: Glycyl lysine isopeptide (Lys-Gly) (interchain with G-Cter in SUMO1); alternate. Residue K325 forms a Glycyl lysine isopeptide (Lys-Gly) (interchain with G-Cter in SUMO2); alternate linkage. K349 is modified (N6-acetyllysine). Position 357 is a phosphoserine (S357). At T368 the chain carries Phosphothreonine. K371 participates in a covalent cross-link: Glycyl lysine isopeptide (Lys-Gly) (interchain with G-Cter in SUMO2). A Glycyl lysine isopeptide (Lys-Gly) (interchain with G-Cter in SUMO2); alternate cross-link involves residue K378. K378 bears the N6-acetyllysine; alternate mark. K399 carries the N6-acetyllysine modification. S402 carries the post-translational modification Phosphoserine. Position 406 is a phosphothreonine (T406). N6-acetyllysine is present on residues K428 and K445. 2 positions are modified to phosphoserine: S459 and S461. 2 positions are modified to N6-acetyllysine: K468 and K477. One can recognise an RRM 3 domain in the interval 486–560 (KTLVLSNLSY…RTIRLELQGP (75 aa)). K513 participates in a covalent cross-link: Glycyl lysine isopeptide (Lys-Gly) (interchain with G-Cter in SUMO2); alternate. K513 carries the post-translational modification N6-acetyllysine; alternate. K521 is modified (N6-acetyllysine). At S563 the chain carries Phosphoserine. An N6-acetyllysine modification is found at K572. In terms of domain architecture, RRM 4 spans 572–647 (KTLFVKGLSE…NKVTLDWAKP (76 aa)). K577 participates in a covalent cross-link: Glycyl lysine isopeptide (Lys-Gly) (interchain with G-Cter in SUMO2); alternate. Position 577 is an N6-acetyllysine; alternate (K577). A Phosphoserine modification is found at S580. Residue K589 forms a Glycyl lysine isopeptide (Lys-Gly) (interchain with G-Cter in SUMO1); alternate linkage. A Glycyl lysine isopeptide (Lys-Gly) (interchain with G-Cter in SUMO2); alternate cross-link involves residue K589. Phosphoserine is present on residues S591 and S619. K624 is covalently cross-linked (Glycyl lysine isopeptide (Lys-Gly) (interchain with G-Cter in SUMO2)). The interval 642-714 (LDWAKPKGEG…KPQGKKTKFE (73 aa)) is disordered. Residue K646 is modified to N6-acetyllysine. A compositionally biased stretch (gly residues) spans 650–703 (EGGFGGRGGGRGGFGGRGGGRGGGRGGFGGRGRGGFGGRGGFRGGRGGGGGGGD). Asymmetric dimethylarginine occurs at positions 656, 660, 666, 670, 674, 680, 682, 688, and 692. At R695 the chain carries Asymmetric dimethylarginine; alternate. R695 bears the Omega-N-methylarginine; alternate mark.

In terms of assembly, identified in a IGF2BP1-dependent mRNP granule complex containing untranslated mRNAs. Component of the SWAP complex that consists of NPM1, NCL/nucleolin, PARP1 and SWAP70. Component of a complex which is at least composed of HTATSF1/Tat-SF1, the P-TEFb complex components CDK9 and CCNT1, RNA polymerase II, SUPT5H, and NCL/nucleolin. Interacts with AICDA. Interacts with APTX. Interacts with C1QBP. Interacts with ERBB4. Interacts (via C-terminus) with FMR1 isoform 6 (via N-terminus). Interacts with GZF1; this interaction is important for nucleolar localization of GZF1. Interacts with NSUN2. Interacts with NVL. Interacts (via N-terminus domain) with SETX. Interacts (via RRM1 and C-terminal RRM4/Arg/Gly-rich domains) with TERT; the interaction is important for nucleolar localization of TERT. Interacts with WDR46. Interacts with ZFP36. Interacts with LRRC34. Interacts with RRP1B. Interacts with HNRNPU; this interaction occurs during mitosis. Interacts with RIOK1; RIOK1 recruits NCL to PRMT5 for symmetrically methylation. Interacts with ZBTB7B. Interacts with MDK; this interaction promotes NCL clustering and lateral movements of this complex into lipid rafts leading to MDK internalization. Interacts with HDGF. Interacts with ALKBH2. Interacts with IGFBP5; this interaction is necessary for IGFBP5 localization to the nucleus. Interacts with DDX24 (when ubiquitinated); this interaction may be important during ribosome biogenesis. In terms of processing, some glutamate residues are glycylated by TTLL8. This modification occurs exclusively on glutamate residues and results in a glycine chain on the gamma-carboxyl group. Symmetrically methylated by PRMT5.

The protein localises to the nucleus. The protein resides in the nucleolus. It is found in the cytoplasm. In terms of biological role, nucleolin is the major nucleolar protein of growing eukaryotic cells. It is found associated with intranucleolar chromatin and pre-ribosomal particles. It induces chromatin decondensation by binding to histone H1. It is thought to play a role in pre-rRNA transcription and ribosome assembly. May play a role in the process of transcriptional elongation. Binds RNA oligonucleotides with 5'-UUAGGG-3' repeats more tightly than the telomeric single-stranded DNA 5'-TTAGGG-3' repeats. This is Nucleolin (NCL) from Mesocricetus auratus (Golden hamster).